Here is a 252-residue protein sequence, read N- to C-terminus: Imidazole glycerol phosphate synthase subunit HisF (252 aa).

Active-site residues include Asp-12 and Asp-131.

The protein belongs to the HisA/HisF family. In terms of assembly, heterodimer of HisH and HisF.

It is found in the cytoplasm. It carries out the reaction 5-[(5-phospho-1-deoxy-D-ribulos-1-ylimino)methylamino]-1-(5-phospho-beta-D-ribosyl)imidazole-4-carboxamide + L-glutamine = D-erythro-1-(imidazol-4-yl)glycerol 3-phosphate + 5-amino-1-(5-phospho-beta-D-ribosyl)imidazole-4-carboxamide + L-glutamate + H(+). The protein operates within amino-acid biosynthesis; L-histidine biosynthesis; L-histidine from 5-phospho-alpha-D-ribose 1-diphosphate: step 5/9. Functionally, IGPS catalyzes the conversion of PRFAR and glutamine to IGP, AICAR and glutamate. The HisF subunit catalyzes the cyclization activity that produces IGP and AICAR from PRFAR using the ammonia provided by the HisH subunit. The protein is Imidazole glycerol phosphate synthase subunit HisF of Thermus thermophilus (strain ATCC 27634 / DSM 579 / HB8).